The primary structure comprises 521 residues: Replicase polyprotein 1ab (521 aa).

One can recognise an AV-Nsp11N/CoV-Nsp15M domain in the interval 1–58 (GGGGQSFLAADNAVLVSTQCYKRHSYVEIPSNLLVQNGMSLKDGANLYVYKRVNGAFV). The NendoU domain occupies 75–216 (EPRSDVERDF…EDGSIKTCYP (142 aa)). Active-site residues include His-104, His-119, Lys-159, Lys-263, Asp-347, Lys-391, and Glu-424. A Nidovirus-type SAM-dependent 2'-O-MTase domain is found at 219-518 (QSAWTCGYNM…NTSFTSDSFV (300 aa)).

Its function is as follows. The replicase polyprotein of coronaviruses is a multifunctional protein: it contains the activities necessary for the transcription of negative stranded RNA, leader RNA, subgenomic mRNAs and progeny virion RNA as well as proteinases responsible for the cleavage of the polyprotein into functional products. Functionally, nendoU is a Mn(2+)-dependent, uridylate-specific enzyme, which leaves 2'-3'-cyclic phosphates 5' to the cleaved bond. This is Replicase polyprotein 1ab (rep) from Gallus gallus (Chicken).